Here is a 126-residue protein sequence, read N- to C-terminus: Anti-adapter protein IraD (126 aa).

Belongs to the GpW/Gp25 family. IraD subfamily. Interacts with RssB.

It is found in the cytoplasm. Its function is as follows. Inhibits RpoS proteolysis by regulating RssB activity, thereby increasing the stability of the sigma stress factor RpoS during oxidative stress. Its effect on RpoS stability is due to its interaction with RssB, which probably blocks the interaction of RssB with RpoS, and the consequent delivery of the RssB-RpoS complex to the ClpXP protein degradation pathway. This is Anti-adapter protein IraD from Salmonella arizonae (strain ATCC BAA-731 / CDC346-86 / RSK2980).